Consider the following 412-residue polypeptide: MYTCDTCEEDLDLSLDLGETYEELETYGGQYVPLELVKPLEDLDRSYEQLKKDPQFRETFHHILKNYAGRPTPLTEVKNFSRAINGPRIFLKREDLLHTGAHKINNVLGQCLIAKFQGKTRVVAETGAGQHGVALAAAAAYLGMECVIFMGETDINRQKPNVDRIRVLGAEVVSVKRGNSGLKEAVDAAIEDFIFKHDHTHFCIGSALGPYPYPKIVRDFQSVISLEVKSQIKEYTDRDPDILIACVGGGSNAIGFFHHFIPNTKVKLVGVEGGGLGVESGKHAARFATGKPGVVHGFHSYVLQDEDGNCADTYSISAGLDYVSVGPTHAEMHESGRAQYTYATDDEALEAFRLLSKTEGIIPALESSHALAHMIKIAPSLDKDTIAIVNLSGRGDKDLSQIIDLDKRKKHS.

Lys-103 carries the post-translational modification N6-(pyridoxal phosphate)lysine.

Belongs to the TrpB family. As to quaternary structure, tetramer of two alpha and two beta chains. Pyridoxal 5'-phosphate serves as cofactor.

It catalyses the reaction (1S,2R)-1-C-(indol-3-yl)glycerol 3-phosphate + L-serine = D-glyceraldehyde 3-phosphate + L-tryptophan + H2O. Its pathway is amino-acid biosynthesis; L-tryptophan biosynthesis; L-tryptophan from chorismate: step 5/5. In terms of biological role, the beta subunit is responsible for the synthesis of L-tryptophan from indole and L-serine. This Chlamydia caviae (strain ATCC VR-813 / DSM 19441 / 03DC25 / GPIC) (Chlamydophila caviae) protein is Tryptophan synthase beta chain 1 (trpB1).